Here is a 485-residue protein sequence, read N- to C-terminus: Glutamyl-tRNA(Gln) amidotransferase subunit A (485 aa).

Residues K78 and S153 each act as charge relay system in the active site. The Acyl-ester intermediate role is filled by S177.

It belongs to the amidase family. GatA subfamily. Heterotrimer of A, B and C subunits.

It catalyses the reaction L-glutamyl-tRNA(Gln) + L-glutamine + ATP + H2O = L-glutaminyl-tRNA(Gln) + L-glutamate + ADP + phosphate + H(+). Functionally, allows the formation of correctly charged Gln-tRNA(Gln) through the transamidation of misacylated Glu-tRNA(Gln) in organisms which lack glutaminyl-tRNA synthetase. The reaction takes place in the presence of glutamine and ATP through an activated gamma-phospho-Glu-tRNA(Gln). In Bacillus anthracis (strain A0248), this protein is Glutamyl-tRNA(Gln) amidotransferase subunit A.